The chain runs to 1581 residues: Mediator of RNA polymerase II transcription subunit 1 (1581 aa).

Residues 1–670 (MKAQGETEES…YGSSPLERQN (670 aa)) form an interaction with the Mediator complex and THRA region. The tract at residues 16–590 (MSSLLERLHA…SIKDRHESVG (575 aa)) is interaction with ESR1. Interaction with the Mediator complex stretches follow at residues 108-212 (FYVE…GYLT) and 215-390 (SGGH…SLQG). Positions 405–644 (PLILNLIRHQ…MAGNTKNHPM (240 aa)) are interaction with THRA. Residues 542–789 (PASSPGYGMT…TDILSDIAEE (248 aa)) are interaction with VDR. Phosphoserine is present on Ser588. An LXXLL motif 1 motif is present at residues 604–608 (LTSLL). Disordered stretches follow at residues 609 to 705 (QITG…HQTE), 792 to 820 (KLPS…QSTL), 874 to 893 (SQSG…GDND), and 948 to 1566 (EHHS…DFMI). Residues 622–632 (PTPPHHTPPPV) show a composition bias toward pro residues. Positions 622-701 (PTPPHHTPPP…SSRLPPEKPK (80 aa)) are interaction with PPARGC1A and THRA. Positions 645 to 649 (LMNLL) match the LXXLL motif 2 motif. A compositionally biased stretch (polar residues) spans 655 to 675 (QDFSTLYGSSPLERQNSSSGS). An interaction with ESR1 region spans residues 656–1066 (DFSTLYGSSP…TPPIPKITIQ (411 aa)). A Phosphoserine modification is found at Ser664. An interaction with GATA1 region spans residues 681–715 (CSGSNKTKKKKSSRLPPEKPKHQTEDDFQRELFSM). Residues 696 to 705 (PPEKPKHQTE) are compositionally biased toward basic and acidic residues. The residue at position 795 (Ser795) is a Phosphoserine. The residue at position 805 (Thr805) is a Phosphothreonine. Positions 808-820 (RDSSSSGHSQSTL) are enriched in polar residues. Residues 875–902 (QSGFGEEYFDESSQSGDNDDFKGFASQA) carry the Integrase domain-binding motif (IBM) motif. A phosphoserine mark is found at Ser887 and Ser953. Residues 963 to 974 (LGKEKTQKRVKE) show a composition bias toward basic and acidic residues. The residue at position 1032 (Thr1032) is a Phosphothreonine; by MAPK1 or MAPK3. Residues 1034–1045 (PTSTGGSKSPGS) show a composition bias toward low complexity. Residues Thr1051 and Thr1057 each carry the phosphothreonine modification. Low complexity-rich tracts occupy residues 1078–1094 (SSHS…SSGS) and 1101–1156 (SSSS…PGSS). Phosphoserine is present on Ser1156. Residues 1162 to 1195 (GLSSGSSSTKMKPQGKPSSLMNPSLSKPNISPSH) show a composition bias toward polar residues. Lys1177 is modified (N6-acetyllysine). Ser1207 carries the post-translational modification Phosphoserine. Thr1215 is subject to Phosphothreonine. 2 stretches are compositionally biased toward low complexity: residues 1218-1227 (SSKAKSPISS) and 1234-1293 (MSGT…SKGK). Ser1223 is modified (phosphoserine). The interval 1249–1421 (LGSSGSLSQK…KPGESSGEGL (173 aa)) is interaction with TP53. Position 1302 is a phosphoserine (Ser1302). Residues 1330–1345 (GVSTNSSSHPMSSKHN) show a composition bias toward polar residues. At Ser1347 the chain carries Phosphoserine. Residues 1352 to 1364 (QGKREKSDKDKSK) show a composition bias toward basic and acidic residues. Ser1403 and Ser1433 each carry phosphoserine. Polar residues-rich tracts occupy residues 1425–1440 (MASS…SGST) and 1448–1482 (PSHS…SPSS). At Thr1440 the chain carries Phosphothreonine. Position 1457 is a phosphothreonine; by MAPK1 or MAPK3 (Thr1457). Phosphoserine occurs at positions 1463, 1465, 1479, 1481, and 1482. The span at 1496–1505 (KHKKHKKEKK) shows a compositional bias: basic residues. The segment covering 1506 to 1522 (KVKDKDRDRDRDKDRDK) has biased composition (basic and acidic residues). An N6-acetyllysine modification is found at Lys1529. A compositionally biased stretch (polar residues) spans 1533-1552 (WSKSPISSDQSLSMTSNTIL).

Belongs to the Mediator complex subunit 1 family. As to quaternary structure, component of the Mediator complex, which is composed of MED1, MED4, MED6, MED7, MED8, MED9, MED10, MED11, MED12, MED13, MED13L, MED14, MED15, MED16, MED17, MED18, MED19, MED20, MED21, MED22, MED23, MED24, MED25, MED26, MED27, MED29, MED30, MED31, CCNC, CDK8 and CDC2L6/CDK11. The MED12, MED13, CCNC and CDK8 subunits form a distinct module termed the CDK8 module. Mediator containing the CDK8 module is less active than Mediator lacking this module in supporting transcriptional activation. Individual preparations of the Mediator complex lacking one or more distinct subunits have been variously termed ARC, CRSP, DRIP, PC2, SMCC and TRAP. This subunit specifically interacts with a number of nuclear receptors in a ligand-dependent fashion including AR, ESR1, ESR2, PPARA, PPARG, RORA, RXRA, RXRG, THRA, THRB and VDR. Interacts with CTNNB1, GABPA, GLI3, PPARGC1A and TP53. Interacts with YWHAH. Interacts with CLOCK; this interaction requires the presence of THRAP3. Interacts with GATA1 and CCAR1. Interacts with NR4A3. Interacts (via IBM motif) with PSIP1 (via IBD domain); phosphorylation increases its affinity for PSIP1. Interacts with USP22. In terms of processing, phosphorylated by MAPK1 or MAPK3 during G2/M phase which may enhance protein stability and promote entry into the nucleolus. Phosphorylation increases its interaction with PSIP1. As to expression, ubiquitously expressed.

It localises to the nucleus. Component of the Mediator complex, a coactivator involved in the regulated transcription of nearly all RNA polymerase II-dependent genes. Mediator functions as a bridge to convey information from gene-specific regulatory proteins to the basal RNA polymerase II transcription machinery. Mediator is recruited to promoters by direct interactions with regulatory proteins and serves as a scaffold for the assembly of a functional preinitiation complex with RNA polymerase II and the general transcription factors. Acts as a coactivator for GATA1-mediated transcriptional activation during erythroid differentiation of K562 erythroleukemia cells. The sequence is that of Mediator of RNA polymerase II transcription subunit 1 (MED1) from Homo sapiens (Human).